The chain runs to 813 residues: Molybdenum cofactor sulfurase (813 aa).

At lysine 228 the chain carries N6-(pyridoxal phosphate)lysine. Cysteine 391 is an active-site residue. The disordered stretch occupies residues 625-670; that stretch reads PSLRHAKAHMQKHQGPKRSAAIEKSSAHSFHDPPTPPDSDSENRKR. Basic residues predominate over residues 628–640; that stretch reads RHAKAHMQKHQGP. Residues 648–812 enclose the MOSC domain; that stretch reads KSSAHSFHDP…IKVGDKVSIG (165 aa).

Belongs to the class-V pyridoxal-phosphate-dependent aminotransferase family. MOCOS subfamily. The cofactor is pyridoxal 5'-phosphate.

The catalysed reaction is Mo-molybdopterin + L-cysteine + AH2 = thio-Mo-molybdopterin + L-alanine + A + H2O. Its function is as follows. Sulfurates the molybdenum cofactor. Sulfation of molybdenum is essential for xanthine dehydrogenase (XDH) and aldehyde oxidase (ADO) enzymes in which molybdenum cofactor is liganded by 1 oxygen and 1 sulfur atom in active form. This chain is Molybdenum cofactor sulfurase, found in Botryotinia fuckeliana (strain B05.10) (Noble rot fungus).